The primary structure comprises 1792 residues: Non-reducing polyketide synthase aptA (1792 aa).

Residues 1-395 form an N-terminal acylcarrier protein transacylase domain (SAT) region; sequence MKDNTHSTTL…PRSFAHSKLA (395 aa). In terms of domain architecture, Ketosynthase family 3 (KS3) spans 391–824; it reads HSKLAVVGMA…GGNTTVLLED (434 aa). Residues Cys-564, His-699, and His-742 each act as for beta-ketoacyl synthase activity in the active site. Residues 926–1243 are malonyl-CoA:ACP transacylase (MAT) domain; that stretch reads VFAFTGQGAF…NLVALHLAGC (318 aa). A product template (PT) domain region spans residues 1308-1625; it reads TSLIHEIIEE…PRLLMDRFFS (318 aa). The N-terminal hotdog fold stretch occupies residues 1312-1447; it reads HEIIEETIGE…GSVRFEADAE (136 aa). A PKS/mFAS DH domain is found at 1312–1621; the sequence is HEIIEETIGE…FRRVPRLLMD (310 aa). Residue His-1344 is the Proton acceptor; for dehydratase activity of the active site. The segment at 1475 to 1621 is C-terminal hotdog fold; sequence QASQLSKALS…FRRVPRLLMD (147 aa). Asp-1533 (proton donor; for dehydratase activity) is an active-site residue. A compositionally biased stretch (low complexity) spans 1634 to 1649; that stretch reads VAASASSAPKTATKHA. Residues 1634-1716 are disordered; the sequence is VAASASSAPK…GPNGTTSQPE (83 aa). Residues 1664–1684 are compositionally biased toward polar residues; that stretch reads TPSSLPTVQAQNTSPPQQVTP. Positions 1694–1705 are enriched in basic and acidic residues; the sequence is TPEEEKPGKADA. One can recognise a Carrier domain in the interval 1715 to 1792; it reads PEATGVVGQC…DMMDWLEQYC (78 aa). Residue Ser-1752 is modified to O-(pantetheine 4'-phosphoryl)serine.

Requires pantetheine 4'-phosphate as cofactor.

The enzyme catalyses holo-[ACP] + 8 malonyl-CoA + acetyl-CoA + 8 H(+) = 3,6,8,9-tetrahydroxy-1-oxo-3-(2-oxopropyl)-1,2,3,4-tetrahydroanthracene-2-carboxyl-[ACP] + 8 CO2 + 9 CoA + 2 H2O. Its pathway is secondary metabolite biosynthesis. Non-reducing polyketide synthase (NRPKS); part of the gene cluster that mediates the biosynthesis of asperthecin, an anthraquinone pigment. Catalyzes the formation of the aromatic polyketide from acetyl coenzyme A and seven malonyl coenzyme A molecules. Through its product template (PT) domain, catalyzes the cyclization of the polyketide backbone via C6-C11 aldolcondensation. Polyketide is subsequently hydrolyzed from the NRPKS by the action of the hydrolase aptB into endocrocin-9-anthrone. Endocrocin-9-anthrone is then oxidized into endocrocin by aptC. Endocrocin is likely to decarboxylate spontaneously to form emodin which explains why there is no decarboxylase in the asperthecin biosynthesis cluster. Finally, aptC or another endogenous oxygenase catalyzes additional oxidation steps to form asperthecin. The chain is Non-reducing polyketide synthase aptA from Emericella nidulans (strain FGSC A4 / ATCC 38163 / CBS 112.46 / NRRL 194 / M139) (Aspergillus nidulans).